The chain runs to 280 residues: 4-diphosphocytidyl-2-C-methyl-D-erythritol kinase (280 aa).

K8 is a catalytic residue. Residue 91–101 (PVAAGLAGGST) participates in ATP binding. D133 is a catalytic residue.

It belongs to the GHMP kinase family. IspE subfamily.

The catalysed reaction is 4-CDP-2-C-methyl-D-erythritol + ATP = 4-CDP-2-C-methyl-D-erythritol 2-phosphate + ADP + H(+). It functions in the pathway isoprenoid biosynthesis; isopentenyl diphosphate biosynthesis via DXP pathway; isopentenyl diphosphate from 1-deoxy-D-xylulose 5-phosphate: step 3/6. Its function is as follows. Catalyzes the phosphorylation of the position 2 hydroxy group of 4-diphosphocytidyl-2C-methyl-D-erythritol. This chain is 4-diphosphocytidyl-2-C-methyl-D-erythritol kinase, found in Clostridium botulinum (strain Loch Maree / Type A3).